The chain runs to 146 residues: Large ribosomal subunit protein bL19 (146 aa).

This sequence belongs to the bacterial ribosomal protein bL19 family.

Its function is as follows. This protein is located at the 30S-50S ribosomal subunit interface and may play a role in the structure and function of the aminoacyl-tRNA binding site. This is Large ribosomal subunit protein bL19 from Bartonella henselae (strain ATCC 49882 / DSM 28221 / CCUG 30454 / Houston 1) (Rochalimaea henselae).